The primary structure comprises 118 residues: Holo-[acyl-carrier-protein] synthase (118 aa).

The Mg(2+) site is built by aspartate 8 and glutamate 58.

This sequence belongs to the P-Pant transferase superfamily. AcpS family. It depends on Mg(2+) as a cofactor.

Its subcellular location is the cytoplasm. The catalysed reaction is apo-[ACP] + CoA = holo-[ACP] + adenosine 3',5'-bisphosphate + H(+). Functionally, transfers the 4'-phosphopantetheine moiety from coenzyme A to a Ser of acyl-carrier-protein. This Listeria welshimeri serovar 6b (strain ATCC 35897 / DSM 20650 / CCUG 15529 / CIP 8149 / NCTC 11857 / SLCC 5334 / V8) protein is Holo-[acyl-carrier-protein] synthase.